We begin with the raw amino-acid sequence, 211 residues long: MYAAAQAKPQSIEVEHLGPAPMSGPRLVATYKPGREIYAQGDLNDKCYQVSTGAVRIYRLLSDGRRQVVSFHLPGEMFGFEAGSNHSFFAEAITETTLAIFGRRNMQERSRELLALALTGMARAQQHLLVIGRQCAVERIAAFLVDLCERQGGGRQLRLPMSRQDIADYLGLTIETVSRVVTKLKERSLIALRDARTIDIMKPEALRSLCN.

The HTH crp-type domain occupies Q134–E204. Positions R163–T182 form a DNA-binding region, H-T-H motif.

FixK is a protein that regulates nitrogen fixation genes both positively and negatively. FixK appears to repress its own expression and that of nifA. FixK may bind DNA at the FNR consensus binding site. In Rhizobium meliloti (strain 1021) (Ensifer meliloti), this protein is Nitrogen fixation regulation protein FixK (fixK).